The primary structure comprises 123 residues: uncharacterized protein (123 aa).

Residues 1 to 28 (MGLGSSKRKEEPPHKSEPKTVGRVKRAG) are disordered. Residues 7-20 (KRKEEPPHKSEPKT) show a composition bias toward basic and acidic residues.

The protein belongs to the TUSC2 family.

This is an uncharacterized protein from Caenorhabditis elegans.